The chain runs to 361 residues: MAGNSIGQHFRVTTFGESHGIALGCIVDGCPPGLEITEADLQTDLDRRRPGTSRYTTQRREPDEVKILSGVFEGKTTGTSIGLLIENTDQRSKDYSDIKDKFRPGHADYTYHQKYGIRDYRGGGRSSARETAMRVAAGAIAKKYLKDEFGVEIRAYLSQMGDVSIDKVDWDEIENNAFFCPDADKVEAFDQLIRDLKKEGDSIGAKIQVVATNVPVGLGEPVFDRLDADIAHALMSINAVKGVEIGDGFDVVNQKGSQHRDPLSPQGFGSNHAGGILGGISTGQDIVANIALKPTSSITVPGDTITKEGEPTQLITKGRHDPCVGIRAVPIAEAMLAIVVMDHLLRHRGQNHGVTTETPKI.

Positions 48 and 54 each coordinate NADP(+). FMN-binding positions include 125-127 (RSS), 238-239 (NA), glycine 278, 293-297 (KPTSS), and arginine 319.

This sequence belongs to the chorismate synthase family. Homotetramer. Requires FMNH2 as cofactor.

It carries out the reaction 5-O-(1-carboxyvinyl)-3-phosphoshikimate = chorismate + phosphate. It functions in the pathway metabolic intermediate biosynthesis; chorismate biosynthesis; chorismate from D-erythrose 4-phosphate and phosphoenolpyruvate: step 7/7. Catalyzes the anti-1,4-elimination of the C-3 phosphate and the C-6 proR hydrogen from 5-enolpyruvylshikimate-3-phosphate (EPSP) to yield chorismate, which is the branch point compound that serves as the starting substrate for the three terminal pathways of aromatic amino acid biosynthesis. This reaction introduces a second double bond into the aromatic ring system. The polypeptide is Chorismate synthase (Vibrio parahaemolyticus serotype O3:K6 (strain RIMD 2210633)).